Reading from the N-terminus, the 403-residue chain is Queuine tRNA-ribosyltransferase catalytic subunit 1 (403 aa).

Residue A2 is modified to N-acetylalanine. The Proton acceptor role is filled by D105. A queuine-binding site is contributed by 105-109 (DSGGF). Residue S139 is modified to Phosphoserine. D159, Q202, and G229 together coordinate queuine. Residues 260-266 (GVGYATD) form an RNA binding region. D279 (nucleophile) is an active-site residue. The interval 284 to 288 (TRTAR) is RNA binding; important for wobble base 34 recognition. The Zn(2+) site is built by C317, C319, C322, and H348.

It belongs to the queuine tRNA-ribosyltransferase family. As to quaternary structure, heterodimer of a catalytic subunit QTRT1 and an accessory subunit QTRT2. The cofactor is Zn(2+). Expressed in brain, heart, kidney, liver, ling, skeletal muscle, spleen and testis.

It localises to the cytoplasm. The protein localises to the mitochondrion outer membrane. Its subcellular location is the nucleus. It carries out the reaction guanosine(34) in tRNA + queuine = queuosine(34) in tRNA + guanine. Its function is as follows. Catalytic subunit of the queuine tRNA-ribosyltransferase (TGT) that catalyzes the base-exchange of a guanine (G) residue with queuine (Q) at position 34 (anticodon wobble position) in tRNAs with GU(N) anticodons (tRNA-Asp, -Asn, -His and -Tyr), resulting in the hypermodified nucleoside queuosine (7-(((4,5-cis-dihydroxy-2-cyclopenten-1-yl)amino)methyl)-7-deazaguanosine). Catalysis occurs through a double-displacement mechanism. The nucleophile active site attacks the C1' of nucleotide 34 to detach the guanine base from the RNA, forming a covalent enzyme-RNA intermediate. The proton acceptor active site deprotonates the incoming queuine, allowing a nucleophilic attack on the C1' of the ribose to form the product. Modification of cytoplasmic tRNAs with queuosine controls the elongation speed of cognate codons, thereby ensuring the correct folding of nascent proteins to maintain proteome integrity. This is Queuine tRNA-ribosyltransferase catalytic subunit 1 from Mus musculus (Mouse).